A 407-amino-acid chain; its full sequence is Multifunctional CCA protein (407 aa).

ATP is bound by residues Gly8 and Arg11. CTP-binding residues include Gly8 and Arg11. The Mg(2+) site is built by Asp21 and Asp23. The ATP site is built by Arg91, Arg137, and Arg140. CTP is bound by residues Arg91, Arg137, and Arg140. Residues 228-329 (TGMHTLMVSQ…IKIFDKMDLW (102 aa)) enclose the HD domain.

The protein belongs to the tRNA nucleotidyltransferase/poly(A) polymerase family. Bacterial CCA-adding enzyme type 1 subfamily. As to quaternary structure, monomer. Can also form homodimers and oligomers. The cofactor is Mg(2+). It depends on Ni(2+) as a cofactor.

It catalyses the reaction a tRNA precursor + 2 CTP + ATP = a tRNA with a 3' CCA end + 3 diphosphate. The catalysed reaction is a tRNA with a 3' CCA end + 2 CTP + ATP = a tRNA with a 3' CCACCA end + 3 diphosphate. Its function is as follows. Catalyzes the addition and repair of the essential 3'-terminal CCA sequence in tRNAs without using a nucleic acid template. Adds these three nucleotides in the order of C, C, and A to the tRNA nucleotide-73, using CTP and ATP as substrates and producing inorganic pyrophosphate. tRNA 3'-terminal CCA addition is required both for tRNA processing and repair. Also involved in tRNA surveillance by mediating tandem CCA addition to generate a CCACCA at the 3' terminus of unstable tRNAs. While stable tRNAs receive only 3'-terminal CCA, unstable tRNAs are marked with CCACCA and rapidly degraded. In Aliivibrio salmonicida (strain LFI1238) (Vibrio salmonicida (strain LFI1238)), this protein is Multifunctional CCA protein.